A 319-amino-acid chain; its full sequence is Beta-xylosidase (319 aa).

Catalysis depends on Asp14, which acts as the Proton acceptor. Catalysis depends on Glu222, which acts as the Proton donor.

This sequence belongs to the glycosyl hydrolase 43 family.

The enzyme catalyses Hydrolysis of (1-&gt;4)-beta-D-xylans, to remove successive D-xylose residues from the non-reducing termini.. Exoxylanase capable of acting on certain xylans and xylooligosaccharides. This chain is Beta-xylosidase (xynB), found in Xylanibacter ruminicola (Prevotella ruminicola).